Reading from the N-terminus, the 286-residue chain is 4-hydroxybenzoate octaprenyltransferase (286 aa).

Transmembrane regions (helical) follow at residues 20-40 (IGTL…AGGM), 43-63 (LKVL…GCII), 96-116 (LFVI…GLVV), 142-162 (FLGV…TGEV), 167-187 (WWLF…YAMV), 210-230 (QIIG…GWSA), 235-255 (VYGL…MLIF), and 266-286 (FLNN…DYLF).

The protein belongs to the UbiA prenyltransferase family. It depends on Mg(2+) as a cofactor.

It is found in the cell inner membrane. It carries out the reaction all-trans-octaprenyl diphosphate + 4-hydroxybenzoate = 4-hydroxy-3-(all-trans-octaprenyl)benzoate + diphosphate. The protein operates within cofactor biosynthesis; ubiquinone biosynthesis. Functionally, catalyzes the prenylation of para-hydroxybenzoate (PHB) with an all-trans polyprenyl group. Mediates the second step in the final reaction sequence of ubiquinone-8 (UQ-8) biosynthesis, which is the condensation of the polyisoprenoid side chain with PHB, generating the first membrane-bound Q intermediate 3-octaprenyl-4-hydroxybenzoate. This Shewanella oneidensis (strain ATCC 700550 / JCM 31522 / CIP 106686 / LMG 19005 / NCIMB 14063 / MR-1) protein is 4-hydroxybenzoate octaprenyltransferase.